Reading from the N-terminus, the 449-residue chain is UDP-N-acetylmuramoylalanine--D-glutamate ligase (449 aa).

118–124 (GTNGKTT) serves as a coordination point for ATP.

It belongs to the MurCDEF family.

Its subcellular location is the cytoplasm. It carries out the reaction UDP-N-acetyl-alpha-D-muramoyl-L-alanine + D-glutamate + ATP = UDP-N-acetyl-alpha-D-muramoyl-L-alanyl-D-glutamate + ADP + phosphate + H(+). It functions in the pathway cell wall biogenesis; peptidoglycan biosynthesis. Functionally, cell wall formation. Catalyzes the addition of glutamate to the nucleotide precursor UDP-N-acetylmuramoyl-L-alanine (UMA). In Staphylococcus epidermidis (strain ATCC 35984 / DSM 28319 / BCRC 17069 / CCUG 31568 / BM 3577 / RP62A), this protein is UDP-N-acetylmuramoylalanine--D-glutamate ligase.